The primary structure comprises 244 residues: MSRLAECTISDTVDELVQRAKLAEQAERYDDMAGACKTMAEMGNELNNEERNLLSVAYKNVLGARRSSWRIMSSIAKKQAGTPLADQTDIYLKKVEEELIPICNDVLALPVLPITEKIGAEAKIFYYKMMGDYYRYLAEVQEGEQNDKSTEAAEEANQKATSLAEAELSVTHPIRLGLALNFSVFYYEIKNMPEKACSLAKAAFDAAITEVDSIKDETYKDSTLIMQLLRDNLTLWNSECETDS.

It belongs to the 14-3-3 family.

The sequence is that of 14-3-3 protein homolog 1 from Echinococcus multilocularis (Fox tapeworm).